Here is a 176-residue protein sequence, read N- to C-terminus: Adenine phosphoribosyltransferase (176 aa).

This sequence belongs to the purine/pyrimidine phosphoribosyltransferase family. In terms of assembly, homodimer.

The protein resides in the cytoplasm. The catalysed reaction is AMP + diphosphate = 5-phospho-alpha-D-ribose 1-diphosphate + adenine. Its pathway is purine metabolism; AMP biosynthesis via salvage pathway; AMP from adenine: step 1/1. In terms of biological role, catalyzes a salvage reaction resulting in the formation of AMP, that is energically less costly than de novo synthesis. This chain is Adenine phosphoribosyltransferase, found in Borrelia garinii subsp. bavariensis (strain ATCC BAA-2496 / DSM 23469 / PBi) (Borreliella bavariensis).